Consider the following 666-residue polypeptide: DNA mismatch repair protein MutL (666 aa).

Belongs to the DNA mismatch repair MutL/HexB family.

Functionally, this protein is involved in the repair of mismatches in DNA. It is required for dam-dependent methyl-directed DNA mismatch repair. May act as a 'molecular matchmaker', a protein that promotes the formation of a stable complex between two or more DNA-binding proteins in an ATP-dependent manner without itself being part of a final effector complex. This chain is DNA mismatch repair protein MutL, found in Clostridium botulinum (strain Langeland / NCTC 10281 / Type F).